Here is a 382-residue protein sequence, read N- to C-terminus: Succinate--CoA ligase [ADP-forming] subunit beta (382 aa).

One can recognise an ATP-grasp domain in the interval 9-237 (RDLLARYGIP…PSAEPEAERR (229 aa)). Residues lysine 45, 52–54 (GRG), isoleucine 94, and glutamate 99 contribute to the ATP site. Mg(2+)-binding residues include asparagine 192 and aspartate 206. Substrate contacts are provided by residues asparagine 257 and 314–316 (GIT).

This sequence belongs to the succinate/malate CoA ligase beta subunit family. Heterotetramer of two alpha and two beta subunits. It depends on Mg(2+) as a cofactor.

The enzyme catalyses succinate + ATP + CoA = succinyl-CoA + ADP + phosphate. It catalyses the reaction GTP + succinate + CoA = succinyl-CoA + GDP + phosphate. It functions in the pathway carbohydrate metabolism; tricarboxylic acid cycle; succinate from succinyl-CoA (ligase route): step 1/1. Its function is as follows. Succinyl-CoA synthetase functions in the citric acid cycle (TCA), coupling the hydrolysis of succinyl-CoA to the synthesis of either ATP or GTP and thus represents the only step of substrate-level phosphorylation in the TCA. The beta subunit provides nucleotide specificity of the enzyme and binds the substrate succinate, while the binding sites for coenzyme A and phosphate are found in the alpha subunit. The protein is Succinate--CoA ligase [ADP-forming] subunit beta of Chloroflexus aggregans (strain MD-66 / DSM 9485).